The chain runs to 374 residues: Queuine tRNA-ribosyltransferase (374 aa).

Asp-95 functions as the Proton acceptor in the catalytic mechanism. Substrate is bound by residues 95–99, Asp-149, Gln-191, and Gly-218; that span reads DSGGF. The interval 249–255 is RNA binding; the sequence is GVGTYRE. Residue Asp-268 is the Nucleophile of the active site. Residues 273–277 form an RNA binding; important for wobble base 34 recognition region; sequence TRWAR. Zn(2+)-binding residues include Cys-306, Cys-308, Cys-311, and His-337.

The protein belongs to the queuine tRNA-ribosyltransferase family. As to quaternary structure, homodimer. Within each dimer, one monomer is responsible for RNA recognition and catalysis, while the other monomer binds to the replacement base PreQ1. Zn(2+) is required as a cofactor.

The catalysed reaction is 7-aminomethyl-7-carbaguanine + guanosine(34) in tRNA = 7-aminomethyl-7-carbaguanosine(34) in tRNA + guanine. The protein operates within tRNA modification; tRNA-queuosine biosynthesis. In terms of biological role, catalyzes the base-exchange of a guanine (G) residue with the queuine precursor 7-aminomethyl-7-deazaguanine (PreQ1) at position 34 (anticodon wobble position) in tRNAs with GU(N) anticodons (tRNA-Asp, -Asn, -His and -Tyr). Catalysis occurs through a double-displacement mechanism. The nucleophile active site attacks the C1' of nucleotide 34 to detach the guanine base from the RNA, forming a covalent enzyme-RNA intermediate. The proton acceptor active site deprotonates the incoming PreQ1, allowing a nucleophilic attack on the C1' of the ribose to form the product. After dissociation, two additional enzymatic reactions on the tRNA convert PreQ1 to queuine (Q), resulting in the hypermodified nucleoside queuosine (7-(((4,5-cis-dihydroxy-2-cyclopenten-1-yl)amino)methyl)-7-deazaguanosine). The protein is Queuine tRNA-ribosyltransferase of Nostoc sp. (strain PCC 7120 / SAG 25.82 / UTEX 2576).